The following is a 517-amino-acid chain: Bifunctional purine biosynthesis protein PurH (517 aa).

The MGS-like domain maps to 1–145 (MSPLALVSVS…KNHKDVSVLV (145 aa)).

The protein belongs to the PurH family.

It catalyses the reaction (6R)-10-formyltetrahydrofolate + 5-amino-1-(5-phospho-beta-D-ribosyl)imidazole-4-carboxamide = 5-formamido-1-(5-phospho-D-ribosyl)imidazole-4-carboxamide + (6S)-5,6,7,8-tetrahydrofolate. The enzyme catalyses IMP + H2O = 5-formamido-1-(5-phospho-D-ribosyl)imidazole-4-carboxamide. Its pathway is purine metabolism; IMP biosynthesis via de novo pathway; 5-formamido-1-(5-phospho-D-ribosyl)imidazole-4-carboxamide from 5-amino-1-(5-phospho-D-ribosyl)imidazole-4-carboxamide (10-formyl THF route): step 1/1. It functions in the pathway purine metabolism; IMP biosynthesis via de novo pathway; IMP from 5-formamido-1-(5-phospho-D-ribosyl)imidazole-4-carboxamide: step 1/1. This is Bifunctional purine biosynthesis protein PurH from Prochlorococcus marinus (strain MIT 9312).